We begin with the raw amino-acid sequence, 820 residues long: Protein phosphatase 1 regulatory subunit 29 (820 aa).

The N-terminal stretch at Met-1–Ala-22 is a signal peptide. Topologically, residues Asp-23–Tyr-397 are extracellular. The N-linked (GlcNAc...) asparagine glycan is linked to Asn-54. LRR repeat units follow at residues Thr-56–Arg-77, Asn-80–Gly-101, Ser-104–Gly-125, Arg-128–Glu-149, and Ser-152–Ser-173. N-linked (GlcNAc...) asparagine glycosylation is found at Asn-80, Asn-85, and Asn-117. Residues Asn-185–Asn-247 form the LRRCT domain. Residues Asn-205 and Asn-247 are each glycosylated (N-linked (GlcNAc...) asparagine). The segment at Leu-250–Ser-294 is disordered. A Fibronectin type-III domain is found at Asp-292–Thr-379. Residues Ile-398–Cys-418 form a helical membrane-spanning segment. Topologically, residues Leu-419–Leu-820 are cytoplasmic. Disordered stretches follow at residues Gly-508–Gly-527 and Ser-589–His-612. Residues Ser-619, Ser-668, and Ser-672 each carry the phosphoserine modification. A disordered region spans residues Thr-654–Leu-677.

In terms of assembly, interacts with PPP1CA.

It localises to the membrane. Functionally, inhibits phosphatase activity of protein phosphatase 1 (PP1) complexes. The protein is Protein phosphatase 1 regulatory subunit 29 (ELFN2) of Homo sapiens (Human).